Reading from the N-terminus, the 189-residue chain is Phosphomevalonate kinase (189 aa).

ATP contacts are provided by residues 10–16 (KRKCGKD) and Arg-138. Asn-168 is a binding site for substrate.

The protein resides in the cytoplasm. Its subcellular location is the cytosol. It catalyses the reaction (R)-5-phosphomevalonate + ATP = (R)-5-diphosphomevalonate + ADP. Its pathway is isoprenoid biosynthesis; isopentenyl diphosphate biosynthesis via mevalonate pathway; isopentenyl diphosphate from (R)-mevalonate: step 2/3. The protein is Phosphomevalonate kinase of Drosophila melanogaster (Fruit fly).